A 293-amino-acid chain; its full sequence is ELMO domain-containing protein 2 (293 aa).

Residues 126-282 (QHEELLMKLW…KFHEKIKGLL (157 aa)) enclose the ELMO domain.

Alveolar cells (morphologically type II cells) and alveolar macrophages (at protein level). Expressed in brain, colon, heart, kidney, liver, lung, muscle, placenta, small intestine, spleen, stomach and testis. In lung it is expressed in alveolar macrophages and alveolar walls.

In terms of biological role, acts as a GTPase-activating protein (GAP) toward guanine nucleotide exchange factors like ARL2, ARL3, ARF1 and ARF6, but not for GTPases outside the Arf family. Regulates IFN-related antiviral responses. This is ELMO domain-containing protein 2 (ELMOD2) from Homo sapiens (Human).